A 253-amino-acid chain; its full sequence is Protein C1orf43 homolog (253 aa).

The helical transmembrane segment at 11 to 31 (VNVVLVMAYGSLVFVLLFIFV) threads the bilayer.

Its subcellular location is the membrane. It is found in the golgi apparatus. It localises to the mitochondrion. In terms of biological role, general regulator of phagocytosis. Required to uptake Gram negative bacterium by macrophages. This Mus musculus (Mouse) protein is Protein C1orf43 homolog.